The sequence spans 483 residues: MSLPDISRRRSPVPQEDWPLTPNALRPSPFPNPVLQALYSLSRVLLFPTYWSLDQLLGCWAPSVRSKSLGWFKVLAGSGVLLPLVVVGLPLALVGLALWLPLQVWRRPFCYQPPPACWVWPQPWHPPAERRRCFVFLTANLCLLPHGLAHFNNLSHSLQRAEAVGAALLDSLQSSQYRVSECSQPPPRVPGGELKATLPMGLDFVCLQEVFDLRAARRLVRVLVPNLGPVIYDVGTFGLMAGPYIKVLGSGLLLASRYPLLRATFRCFPNARREDAMASKGLLSVQAQLGIVDGHPIVGYLHCTHLHAPVEDGHIRCKQLTLLLEWVEEFEAENRQSDEAVAFSVLLGDLNFDNCSQDHAKEQGHKLFSCFQDPCRLGVCQEQPWALGTILNSSMLRHSIACSPEMLRRALRQEKGRRLYLSGPLHGSYPAQSWKGRRLDYITYRRVPGSRLSPEAEQVTFSTAFAGLTDHLAMGLKLQVVCS.

The segment at 1-20 (MSLPDISRRRSPVPQEDWPL) is disordered. Residues 80–100 (VLLPLVVVGLPLALVGLALWL) traverse the membrane as a helical segment. Position 209 (glutamate 209) interacts with Mg(2+). Histidine 471 (proton acceptor) is an active-site residue.

Belongs to the neutral sphingomyelinase family. The cofactor is Mg(2+). It depends on Mn(2+) as a cofactor. Highly expressed in testis, pancreas, epididymis, and brain.

It is found in the mitochondrion inner membrane. Its subcellular location is the endoplasmic reticulum membrane. It carries out the reaction a sphingomyelin + H2O = phosphocholine + an N-acylsphing-4-enine + H(+). It catalyses the reaction N-(hexadecanoyl)-sphing-4-enine-1-phosphocholine + H2O = N-hexadecanoylsphing-4-enine + phosphocholine + H(+). The protein operates within lipid metabolism; sphingolipid metabolism. Activated by anionic phospholipids, specially cardiolipin and phosphatidylserine. Catalyzes the hydrolysis of membrane sphingomyelin to form phosphorylcholine and ceramide. The polypeptide is Sphingomyelin phosphodiesterase 5 (Mus musculus (Mouse)).